The primary structure comprises 175 residues: ATP synthase subunit d, mitochondrial (175 aa).

Ser-2 carries the post-translational modification N-acetylserine.

F-type ATP synthases have 2 components, the catalytic core F(1) and the membrane-embedded component F(0), linked together by a central stalk and a peripheral stalk. The central stalk, also called rotor shaft, is often seen as part of F(1). The peripheral stalk is seen as part of F(0). F(0) contains the membrane channel next to the rotor. F-type ATP synthases form dimers but each monomer functions independently in ATP generation. The dimer consists of 18 different polypeptides: ATP1 (subunit alpha, part of F(1), 3 molecules per monomer), ATP2 (subunit beta, part of F(1), 3 molecules per monomer), ATP3 (subunit gamma, part of the central stalk), ATP4 (subunit b, part of the peripheral stalk), ATP5/OSCP (subunit 5/OSCP, part of the peripheral stalk), ATP6 (subunit a, part of the peripheral stalk), ATP7 (subunit d, part of the peripheral stalk), ATP8 (subunit 8, part of the peripheral stalk), OLI1 (subunit c, part of the rotor, 10 molecules per monomer), ATP14 (subunit h, part of the peripheral stalk), ATP15 (subunit epsilon, part of the central stalk), ATP16 (subunit delta, part of the central stalk), ATP17 (subunit f, part of the peripheral stalk), ATP18 (subunit i/j, part of the peripheral stalk). Dimer-specific subunits are ATP19 (subunit k, at interface between monomers), ATP20 (subunit g, at interface between monomers), TIM11 (subunit e, at interface between monomers). Also contains subunit L.

It is found in the mitochondrion inner membrane. Mitochondrial membrane ATP synthase (F(1)F(0) ATP synthase or Complex V) produces ATP from ADP in the presence of a proton gradient across the membrane which is generated by electron transport complexes of the respiratory chain. F-type ATP synthases consist of two structural domains, F(1) - containing the extramembraneous catalytic core, and F(0) - containing the membrane proton channel, linked together by a central stalk and a peripheral stalk. During catalysis, ATP synthesis in the catalytic domain of F(1) is coupled via a rotary mechanism of the central stalk subunits to proton translocation. Part of the complex F(0) domain and the peripheral stalk, which acts as a stator to hold the catalytic alpha/ATP1(3)beta/ATP2(3) subcomplex and subunit a/ATP6 static relative to the rotary elements. This chain is ATP synthase subunit d, mitochondrial, found in Pichia angusta (Yeast).